Reading from the N-terminus, the 258-residue chain is Indole-3-glycerol phosphate synthase (258 aa).

It belongs to the TrpC family.

The enzyme catalyses 1-(2-carboxyphenylamino)-1-deoxy-D-ribulose 5-phosphate + H(+) = (1S,2R)-1-C-(indol-3-yl)glycerol 3-phosphate + CO2 + H2O. The protein operates within amino-acid biosynthesis; L-tryptophan biosynthesis; L-tryptophan from chorismate: step 4/5. The chain is Indole-3-glycerol phosphate synthase from Campylobacter fetus subsp. fetus (strain 82-40).